Here is a 443-residue protein sequence, read N- to C-terminus: Methionine aminopeptidase 2-1 (443 aa).

Residues 1 to 90 are disordered; that stretch reads MAAQADDELN…RVPVSELFPN (90 aa). The segment covering 33–48 has biased composition (acidic residues); that stretch reads ADNDDSEDDEKEEEGG. Positions 58-73 are enriched in basic residues; that stretch reads KKKKKRKPKKKKKGGA. Residue histidine 196 coordinates substrate. Residues aspartate 216, aspartate 227, and histidine 296 each contribute to the a divalent metal cation site. Residue histidine 304 participates in substrate binding. 2 residues coordinate a divalent metal cation: glutamate 329 and glutamate 424.

The protein belongs to the peptidase M24A family. Methionine aminopeptidase eukaryotic type 2 subfamily. Requires Co(2+) as cofactor. It depends on Zn(2+) as a cofactor. The cofactor is Mn(2+). Fe(2+) is required as a cofactor.

It is found in the cytoplasm. The enzyme catalyses Release of N-terminal amino acids, preferentially methionine, from peptides and arylamides.. In terms of biological role, cotranslationally removes the N-terminal methionine from nascent proteins. The N-terminal methionine is often cleaved when the second residue in the primary sequence is small and uncharged (Met-Ala-, Cys, Gly, Pro, Ser, Thr, or Val). The chain is Methionine aminopeptidase 2-1 from Talaromyces stipitatus (strain ATCC 10500 / CBS 375.48 / QM 6759 / NRRL 1006) (Penicillium stipitatum).